Here is a 534-residue protein sequence, read N- to C-terminus: Arginine--tRNA ligase (534 aa).

A 'HIGH' region motif is present at residues 120–130 (ANPTGFLHLGH).

This sequence belongs to the class-I aminoacyl-tRNA synthetase family. As to quaternary structure, monomer.

The protein resides in the cytoplasm. The enzyme catalyses tRNA(Arg) + L-arginine + ATP = L-arginyl-tRNA(Arg) + AMP + diphosphate. The sequence is that of Arginine--tRNA ligase from Mesomycoplasma hyopneumoniae (strain J / ATCC 25934 / NCTC 10110) (Mycoplasma hyopneumoniae).